The primary structure comprises 196 residues: uncharacterized protein (196 aa).

In terms of domain architecture, HD spans 51-164; it reads VAEHSLLVEE…DRIFGKPDPV (114 aa).

This is an uncharacterized protein from Rhodobacter capsulatus (strain ATCC BAA-309 / NBRC 16581 / SB1003).